The chain runs to 129 residues: Small ribosomal subunit protein uS11 (129 aa).

The protein belongs to the universal ribosomal protein uS11 family. In terms of assembly, part of the 30S ribosomal subunit. Interacts with proteins S7 and S18. Binds to IF-3.

Functionally, located on the platform of the 30S subunit, it bridges several disparate RNA helices of the 16S rRNA. Forms part of the Shine-Dalgarno cleft in the 70S ribosome. The polypeptide is Small ribosomal subunit protein uS11 (Lactiplantibacillus plantarum (strain ATCC BAA-793 / NCIMB 8826 / WCFS1) (Lactobacillus plantarum)).